The sequence spans 107 residues: Sulmotoxin 1 (107 aa).

The N-terminal stretch at M1–A19 is a signal peptide. Positions N20–R34 are excised as a propeptide. Cystine bridges form between C44-C68, C47-C55, C61-C83, C87-C98, and C99-C104.

Belongs to the three-finger toxin family. Ancestral subfamily. Boigatoxin sub-subfamily. As to quaternary structure, monomer. Expressed by the venom gland.

It localises to the secreted. In terms of biological role, mammal-specific neurotoxin (tested on mice). Not toxic to lizards (tested on geckos). The sequence is that of Sulmotoxin 1 from Spilotes sulphureus (Amazon puffing snake).